A 314-amino-acid chain; its full sequence is Probable RuBisCO transcriptional regulator (314 aa).

An HTH lysR-type domain is found at 6–63; it reads FTLDQLKIIKTIHREGSFKTAAKKLYISQPAVSRQVQNLERQLNTPIFYRDKRKARLT. The segment at residues 23–42 is a DNA-binding region (H-T-H motif); that stretch reads FKTAAKKLYISQPAVSRQVQ.

This sequence belongs to the LysR transcriptional regulatory family.

The protein localises to the plastid. It localises to the chloroplast. Trans-acting transcriptional regulator of RuBisCO genes (rbcL and rbcS) expression. The protein is Probable RuBisCO transcriptional regulator (rbcR) of Emiliania huxleyi (Coccolithophore).